A 196-amino-acid chain; its full sequence is dTDP-4-dehydro-6-deoxyglucose 3-epimerase (196 aa).

Substrate-binding positions include R21, E26, 45–47 (QVN), and R57. H60 acts as the Proton acceptor in catalysis. Residues K70 and R117 each contribute to the substrate site. Y130 (proton donor) is an active-site residue. Residues E141 and R166 each coordinate substrate.

Belongs to the dTDP-4-dehydrorhamnose 3,5-epimerase family. In terms of assembly, homodimer.

It carries out the reaction dTDP-4-dehydro-6-deoxy-alpha-D-glucose = dTDP-4-dehydro-6-deoxy-alpha-D-allose. It participates in antibiotic biosynthesis. Functionally, involved in the biosynthesis of dTDP-6-deoxy-D-allose, an intermediate in the biosynthesis of mycinose, which is one of the two unusual sugars attached to the 16-membered macrolactone ring of the aglycone antibiotic chalcomycin. Catalyzes the conversion of dTDP-4-oxo-6-deoxyglucose to dTDP-4-oxo-6-deoxyallose, via a C-3 epimerization. This is dTDP-4-dehydro-6-deoxyglucose 3-epimerase from Streptomyces bikiniensis.